A 139-amino-acid polypeptide reads, in one-letter code: Large ribosomal subunit protein uL16 (139 aa).

Over residues 1 to 19 (MLIPRRVKHRKQHHPKRSG) the composition is skewed to basic residues. A disordered region spans residues 1–25 (MLIPRRVKHRKQHHPKRSGMSKGGT).

It belongs to the universal ribosomal protein uL16 family. Part of the 50S ribosomal subunit.

Binds 23S rRNA and is also seen to make contacts with the A and possibly P site tRNAs. This is Large ribosomal subunit protein uL16 from Streptomyces griseus subsp. griseus (strain JCM 4626 / CBS 651.72 / NBRC 13350 / KCC S-0626 / ISP 5235).